Consider the following 147-residue polypeptide: 3-dehydroquinate dehydratase (147 aa).

Y23 serves as the catalytic Proton acceptor. 3 residues coordinate substrate: N74, H80, and D87. Residue H100 is the Proton donor of the active site. Residues 101-102 (LS) and R111 each bind substrate.

Belongs to the type-II 3-dehydroquinase family. Homododecamer.

It catalyses the reaction 3-dehydroquinate = 3-dehydroshikimate + H2O. The protein operates within metabolic intermediate biosynthesis; chorismate biosynthesis; chorismate from D-erythrose 4-phosphate and phosphoenolpyruvate: step 3/7. Catalyzes a trans-dehydration via an enolate intermediate. The chain is 3-dehydroquinate dehydratase from Clostridium botulinum (strain ATCC 19397 / Type A).